The sequence spans 406 residues: Acetylornithine/succinyldiaminopimelate aminotransferase (406 aa).

Residues 108-109 (GT) and Phe141 each bind pyridoxal 5'-phosphate. Arg144 is a binding site for N(2)-acetyl-L-ornithine. Residue 226-229 (DEVQ) participates in pyridoxal 5'-phosphate binding. At Lys255 the chain carries N6-(pyridoxal phosphate)lysine. Ser283 contributes to the N(2)-acetyl-L-ornithine binding site. Thr284 provides a ligand contact to pyridoxal 5'-phosphate.

The protein belongs to the class-III pyridoxal-phosphate-dependent aminotransferase family. ArgD subfamily. Homodimer. The cofactor is pyridoxal 5'-phosphate.

The protein resides in the cytoplasm. It carries out the reaction N(2)-acetyl-L-ornithine + 2-oxoglutarate = N-acetyl-L-glutamate 5-semialdehyde + L-glutamate. The enzyme catalyses N-succinyl-(2S,6S)-2,6-diaminopimelate + 2-oxoglutarate = (S)-2-succinylamino-6-oxoheptanedioate + L-glutamate. It functions in the pathway amino-acid biosynthesis; L-arginine biosynthesis; N(2)-acetyl-L-ornithine from L-glutamate: step 4/4. It participates in amino-acid biosynthesis; L-lysine biosynthesis via DAP pathway; LL-2,6-diaminopimelate from (S)-tetrahydrodipicolinate (succinylase route): step 2/3. Involved in both the arginine and lysine biosynthetic pathways. This Escherichia coli O6:H1 (strain CFT073 / ATCC 700928 / UPEC) protein is Acetylornithine/succinyldiaminopimelate aminotransferase.